A 259-amino-acid polypeptide reads, in one-letter code: Deoxyribose-phosphate aldolase (259 aa).

The active-site Proton donor/acceptor is D102. K167 serves as the catalytic Schiff-base intermediate with acetaldehyde. The Proton donor/acceptor role is filled by K201.

This sequence belongs to the DeoC/FbaB aldolase family. DeoC type 2 subfamily.

It localises to the cytoplasm. It catalyses the reaction 2-deoxy-D-ribose 5-phosphate = D-glyceraldehyde 3-phosphate + acetaldehyde. The protein operates within carbohydrate degradation; 2-deoxy-D-ribose 1-phosphate degradation; D-glyceraldehyde 3-phosphate and acetaldehyde from 2-deoxy-alpha-D-ribose 1-phosphate: step 2/2. Catalyzes a reversible aldol reaction between acetaldehyde and D-glyceraldehyde 3-phosphate to generate 2-deoxy-D-ribose 5-phosphate. This is Deoxyribose-phosphate aldolase from Serratia proteamaculans (strain 568).